Consider the following 87-residue polypeptide: U3-theraphotoxin-Hhn1a 10 (87 aa).

Residues 1 to 24 form the signal peptide; that stretch reads MVNMEASMFLTFAGLVLLFVVCYA. The propeptide occupies 25-52; the sequence is SESEEKEFPKEMLSSIFAVDNDFKQEER. Intrachain disulfides connect Cys54–Cys67, Cys61–Cys72, and Cys66–Cys79.

Belongs to the neurotoxin 10 (Hwtx-1) family. 51 (Hntx-8) subfamily. Hntx-8 sub-subfamily. Expressed by the venom gland.

It is found in the secreted. In terms of biological role, ion channel inhibitor. The chain is U3-theraphotoxin-Hhn1a 10 from Cyriopagopus hainanus (Chinese bird spider).